A 315-amino-acid chain; its full sequence is B3 domain-containing protein At1g05920 (315 aa).

Residues 24 to 129 (MISRDNQKKT…PQVASVPKSV (106 aa)) are disordered. Composition is skewed to basic and acidic residues over residues 39-51 (VREE…EEMI), 66-83 (KEGK…DNRT), and 100-114 (FDHV…HAYL). The TF-B3 DNA-binding region spans 204–306 (INTVIQNDFL…ILCFALVPPT (103 aa)).

It localises to the nucleus. In Arabidopsis thaliana (Mouse-ear cress), this protein is B3 domain-containing protein At1g05920.